Reading from the N-terminus, the 311-residue chain is Putative UPF0607 protein ENSP00000382826 (311 aa).

A compositionally biased stretch (basic and acidic residues) spans 48–61; the sequence is AEEPKEATEVKDQV. 3 disordered regions span residues 48 to 99, 186 to 229, and 291 to 311; these read AEEP…WYNP, GLLM…PLQL, and RKQL…GSCL. Residues 78-97 are compositionally biased toward polar residues; that stretch reads EAASTSRPLETQGNLTSSWY. Composition is skewed to basic residues over residues 213 to 222 and 291 to 305; these read AGHRSRKRKL and RKQL…RQGR.

Belongs to the UPF0607 family.

This is Putative UPF0607 protein ENSP00000382826 from Homo sapiens (Human).